The sequence spans 483 residues: UDP-N-acetylmuramoyl-L-alanyl-D-glutamate--2,6-diaminopimelate ligase (483 aa).

Residue Ser-29 participates in UDP-N-acetyl-alpha-D-muramoyl-L-alanyl-D-glutamate binding. Position 107 to 113 (107 to 113 (GTSGKTS)) interacts with ATP. Residues 149-150 (TT), Ser-176, Gln-182, and Arg-184 each bind UDP-N-acetyl-alpha-D-muramoyl-L-alanyl-D-glutamate. Lys-216 is modified (N6-carboxylysine). Meso-2,6-diaminopimelate contacts are provided by residues Arg-380, 404-407 (DNPR), Gly-452, and Glu-456. A Meso-diaminopimelate recognition motif motif is present at residues 404 to 407 (DNPR).

It belongs to the MurCDEF family. MurE subfamily. It depends on Mg(2+) as a cofactor. In terms of processing, carboxylation is probably crucial for Mg(2+) binding and, consequently, for the gamma-phosphate positioning of ATP.

It localises to the cytoplasm. The enzyme catalyses UDP-N-acetyl-alpha-D-muramoyl-L-alanyl-D-glutamate + meso-2,6-diaminopimelate + ATP = UDP-N-acetyl-alpha-D-muramoyl-L-alanyl-gamma-D-glutamyl-meso-2,6-diaminopimelate + ADP + phosphate + H(+). Its pathway is cell wall biogenesis; peptidoglycan biosynthesis. Catalyzes the addition of meso-diaminopimelic acid to the nucleotide precursor UDP-N-acetylmuramoyl-L-alanyl-D-glutamate (UMAG) in the biosynthesis of bacterial cell-wall peptidoglycan. This Chelativorans sp. (strain BNC1) protein is UDP-N-acetylmuramoyl-L-alanyl-D-glutamate--2,6-diaminopimelate ligase.